The chain runs to 374 residues: Carboxypeptidase O (374 aa).

An N-terminal signal peptide occupies residues 1 to 20 (MKPLLETLYLLGMLVPGGLG). The 296-residue stretch at 49–344 (IYHPMGEIYE…EAVLSVLDDV (296 aa)) folds into the Peptidase M14 domain. His108 and Glu111 together coordinate Zn(2+). N-linked (GlcNAc...) asparagine glycans are attached at residues Asn132, Asn174, and Asn187. Zn(2+) is bound at residue His236. A glycan (N-linked (GlcNAc...) asparagine) is linked at Asn251. Glu310 serves as the catalytic Proton donor/acceptor. Residue Asp352 is the site of GPI-anchor amidated aspartate attachment. Positions 353–374 (SAGRVTSATMLLGLLVSCMSLL) are cleaved as a propeptide — removed in mature form.

It belongs to the peptidase M14 family. The cofactor is Zn(2+). N-glycosylated. Detected in enterocytes of the ileum.

The protein resides in the apical cell membrane. With respect to regulation, strongly inhibited by potato carboxypeptidase inhibitor, and the chelating agents EDTA and 1,10-phenanthroline. Also inhibited by compounds with multiple carboxylic acid groups such as citrate and succinate, and to a lesser exent the amino acids aspartate and glutamate. Not significantly inhibited by benzylsuccinic acid. Carboxypeptidase which preferentially cleaves C-terminal acidic residues from peptides and proteins. Can also cleave C-terminal hydrophobic amino acids, with a preference for small residues over large residues. This Homo sapiens (Human) protein is Carboxypeptidase O.